We begin with the raw amino-acid sequence, 458 residues long: Histidine--tRNA ligase (458 aa).

This sequence belongs to the class-II aminoacyl-tRNA synthetase family. In terms of assembly, homodimer.

It localises to the cytoplasm. The catalysed reaction is tRNA(His) + L-histidine + ATP = L-histidyl-tRNA(His) + AMP + diphosphate + H(+). This Micrococcus luteus (strain ATCC 4698 / DSM 20030 / JCM 1464 / CCM 169 / CCUG 5858 / IAM 1056 / NBRC 3333 / NCIMB 9278 / NCTC 2665 / VKM Ac-2230) (Micrococcus lysodeikticus) protein is Histidine--tRNA ligase.